The following is a 116-amino-acid chain: uncharacterized protein (116 aa).

This is an uncharacterized protein from Methanocaldococcus jannaschii (strain ATCC 43067 / DSM 2661 / JAL-1 / JCM 10045 / NBRC 100440) (Methanococcus jannaschii).